Here is a 264-residue protein sequence, read N- to C-terminus: Thymidylate synthase (264 aa).

Residues R21 and 126 to 127 (RR) contribute to the dUMP site. Catalysis depends on C146, which acts as the Nucleophile. DUMP is bound by residues 166 to 169 (RSAD), N177, and 207 to 209 (HLY). D169 lines the (6R)-5,10-methylene-5,6,7,8-tetrahydrofolate pocket. A263 is a binding site for (6R)-5,10-methylene-5,6,7,8-tetrahydrofolate.

This sequence belongs to the thymidylate synthase family. Bacterial-type ThyA subfamily. As to quaternary structure, homodimer.

It localises to the cytoplasm. The catalysed reaction is dUMP + (6R)-5,10-methylene-5,6,7,8-tetrahydrofolate = 7,8-dihydrofolate + dTMP. Its pathway is pyrimidine metabolism; dTTP biosynthesis. Catalyzes the reductive methylation of 2'-deoxyuridine-5'-monophosphate (dUMP) to 2'-deoxythymidine-5'-monophosphate (dTMP) while utilizing 5,10-methylenetetrahydrofolate (mTHF) as the methyl donor and reductant in the reaction, yielding dihydrofolate (DHF) as a by-product. This enzymatic reaction provides an intracellular de novo source of dTMP, an essential precursor for DNA biosynthesis. This is Thymidylate synthase from Rhodopseudomonas palustris (strain BisB5).